The primary structure comprises 408 residues: L,D-transpeptidase 2 (408 aa).

The signal sequence occupies residues 1 to 34; sequence MPKVGIAAQAGRTRVRRAWLTALMMTAVMIGAVA. The N-palmitoyl cysteine moiety is linked to residue cysteine 35. The S-diacylglycerol cysteine moiety is linked to residue cysteine 35. 3 residues coordinate Ca(2+): aspartate 232, glutamate 235, and glycine 236. The region spanning 253-378 is the L,D-TPase catalytic domain; sequence VIATADDNTK…VKRGDIVEVV (126 aa). Residues tyrosine 318 and 331–332 each bind substrate; that span reads SG. Histidine 336 (proton donor/acceptor) is an active-site residue. Cysteine 354 acts as the Nucleophile in catalysis. Residue asparagine 356 coordinates substrate.

As to quaternary structure, monomer.

It localises to the cell membrane. The protein operates within cell wall biogenesis; peptidoglycan biosynthesis. Its activity is regulated as follows. Is irreversibly inactivated by the beta-lactams carbapenems via the formation of a covalent adduct resulting from acylation of the catalytic Cys. In terms of biological role, generates 3-&gt;3 cross-links in peptidoglycan, catalyzing the cleavage of the mDap(3)-D-Ala(4) bond of a tetrapeptide donor stem and the formation of a bond between the carbonyl of mDap(3) of the donor stem and the side chain of mDap(3) of the acceptor stem. Is specific for donor substrates containing a stem tetrapeptide since it cannot use pentapeptide stems. Is essential for virulence in a mouse model of acute infection. The protein is L,D-transpeptidase 2 (ldtB) of Mycobacterium tuberculosis (strain CDC 1551 / Oshkosh).